The following is a 1366-amino-acid chain: DNA-directed RNA polymerase subunit beta'' (1366 aa).

Zn(2+) is bound by residues Cys220, Cys291, Cys298, and Cys301.

The protein belongs to the RNA polymerase beta' chain family. RpoC2 subfamily. As to quaternary structure, in plastids the minimal PEP RNA polymerase catalytic core is composed of four subunits: alpha, beta, beta', and beta''. When a (nuclear-encoded) sigma factor is associated with the core the holoenzyme is formed, which can initiate transcription. The cofactor is Zn(2+).

It localises to the plastid. It is found in the chloroplast. The catalysed reaction is RNA(n) + a ribonucleoside 5'-triphosphate = RNA(n+1) + diphosphate. Functionally, DNA-dependent RNA polymerase catalyzes the transcription of DNA into RNA using the four ribonucleoside triphosphates as substrates. This Phaseolus vulgaris (Kidney bean) protein is DNA-directed RNA polymerase subunit beta''.